The sequence spans 191 residues: Threonylcarbamoyl-AMP synthase (191 aa).

The 185-residue stretch at 7–191 (QSELNDALKI…FHASTGKRLR (185 aa)) folds into the YrdC-like domain.

This sequence belongs to the SUA5 family. TsaC subfamily.

It is found in the cytoplasm. It carries out the reaction L-threonine + hydrogencarbonate + ATP = L-threonylcarbamoyladenylate + diphosphate + H2O. Its function is as follows. Required for the formation of a threonylcarbamoyl group on adenosine at position 37 (t(6)A37) in tRNAs that read codons beginning with adenine. Catalyzes the conversion of L-threonine, HCO(3)(-)/CO(2) and ATP to give threonylcarbamoyl-AMP (TC-AMP) as the acyladenylate intermediate, with the release of diphosphate. This is Threonylcarbamoyl-AMP synthase from Psychromonas ingrahamii (strain DSM 17664 / CCUG 51855 / 37).